Here is a 209-residue protein sequence, read N- to C-terminus: Orotate phosphoribosyltransferase (209 aa).

Residues R96, K100, H102, and 122–130 contribute to the 5-phospho-alpha-D-ribose 1-diphosphate site; that span reads EDLISTGGS. S126 contributes to the orotate binding site.

This sequence belongs to the purine/pyrimidine phosphoribosyltransferase family. PyrE subfamily. Homodimer. The cofactor is Mg(2+).

It carries out the reaction orotidine 5'-phosphate + diphosphate = orotate + 5-phospho-alpha-D-ribose 1-diphosphate. Its pathway is pyrimidine metabolism; UMP biosynthesis via de novo pathway; UMP from orotate: step 1/2. Catalyzes the transfer of a ribosyl phosphate group from 5-phosphoribose 1-diphosphate to orotate, leading to the formation of orotidine monophosphate (OMP). This chain is Orotate phosphoribosyltransferase, found in Streptococcus pyogenes serotype M5 (strain Manfredo).